The chain runs to 351 residues: Prostaglandin reductase 2 (351 aa).

99-100 contributes to the substrate binding site; it reads FY. NADP(+) contacts are provided by residues 165 to 168, lysine 192, tyrosine 208, asparagine 231, 253 to 259, 287 to 289, and asparagine 337; these read GACG, CGQISQY, and FLV. A substrate-binding site is contributed by 288 to 290; that stretch reads LVL.

Belongs to the NADP-dependent oxidoreductase L4BD family. Monomer.

Its subcellular location is the cytoplasm. The catalysed reaction is 13,14-dihydro-15-oxo-prostaglandin E2 + NAD(+) = 15-oxoprostaglandin E2 + NADH + H(+). It carries out the reaction 13,14-dihydro-15-oxo-prostaglandin E2 + NADP(+) = 15-oxoprostaglandin E2 + NADPH + H(+). It catalyses the reaction 13,14-dihydro-15-oxo-PGF2alpha + NADP(+) = 15-oxoprostaglandin F2alpha + NADPH + H(+). The enzyme catalyses 13,14-dihydro-15-oxo-prostaglandin E1 + NADP(+) = 15-oxoprostaglandin E1 + NADPH + H(+). The catalysed reaction is 13,14-dihydro-15-oxo-prostaglandin F1alpha + NADP(+) = 15-oxoprostaglandin F1alpha + NADPH + H(+). Functions as 15-oxo-prostaglandin 13-reductase and acts on 15-keto-PGE1, 15-keto-PGE2, 15-keto-PGE1-alpha and 15-keto-PGE2-alpha with highest activity towards 15-keto-PGE2. Overexpression represses transcriptional activity of PPARG and inhibits adipocyte differentiation. The polypeptide is Prostaglandin reductase 2 (PTGR2) (Pongo abelii (Sumatran orangutan)).